Reading from the N-terminus, the 471-residue chain is Probable ribonuclease FAU-1 (471 aa).

This sequence belongs to the FAU-1 family.

Probable RNase involved in rRNA stability through maturation and/or degradation of precursor rRNAs. Binds to RNA in loop regions with AU-rich sequences. This chain is Probable ribonuclease FAU-1, found in Caldivirga maquilingensis (strain ATCC 700844 / DSM 13496 / JCM 10307 / IC-167).